We begin with the raw amino-acid sequence, 485 residues long: MSLFDHSVSELHTLLKKKEVSISDLVDESYRRIDEVEEKVQAFLTLNEEQARAKAKELDNQLAKGEETNPLFGLPIGIKDNIVTKGLRTTCASKILYNFDPIYDATVMERLNAAGTITIGKLNMDEFAMGSSTENSGFQLTRNPWDLERVPGGSSGGSAAAVAAGEVPFALGSDTGGSIRQPAAFCGVVGLKPTYGRVSRFGLVAFASSLDQIGPITRTVEDNAYVLQAIAGVDPMDSTSANIPVPNYVEALTGDIKGLKIAVPKEYLGEGVDEGVRQSVLAALAVLEKLGAAWEEVSLPHSKYALATYYLLASSEASANLARFDGVRYGYRTDNAKNLIDMYKLTRSEGFGAEVKRRIMLGTFALSSGYYDAYYKKAQKVRTLIKRDFENVFERYDVIIGPTTPTPAFKIGEKTSDPLTMYMNDILTIPVNLAGVPAISVPCGFVDGLPVGLQIIGKHFDESTVYRVAHAFEQATDYHKQKPVL.

Catalysis depends on charge relay system residues Lys79 and Ser154. Ser178 functions as the Acyl-ester intermediate in the catalytic mechanism.

This sequence belongs to the amidase family. GatA subfamily. As to quaternary structure, heterotrimer of A, B and C subunits.

It carries out the reaction L-glutamyl-tRNA(Gln) + L-glutamine + ATP + H2O = L-glutaminyl-tRNA(Gln) + L-glutamate + ADP + phosphate + H(+). Allows the formation of correctly charged Gln-tRNA(Gln) through the transamidation of misacylated Glu-tRNA(Gln) in organisms which lack glutaminyl-tRNA synthetase. The reaction takes place in the presence of glutamine and ATP through an activated gamma-phospho-Glu-tRNA(Gln). The polypeptide is Glutamyl-tRNA(Gln) amidotransferase subunit A (Geobacillus kaustophilus (strain HTA426)).